The following is a 93-amino-acid chain: Small ribosomal subunit protein uS19 (93 aa).

The protein belongs to the universal ribosomal protein uS19 family.

Its function is as follows. Protein S19 forms a complex with S13 that binds strongly to the 16S ribosomal RNA. The chain is Small ribosomal subunit protein uS19 from Desulfitobacterium hafniense (strain Y51).